The chain runs to 275 residues: Large ribosomal subunit protein uL2 (275 aa).

The segment at 216–275 is disordered; the sequence is GIRPQTRGSAMNPIDHPHGGGEGKTNSGRHPVTPWGMPTKGYKTRKKKASDKLIISKRKK. A compositionally biased stretch (basic residues) spans 257-275; sequence YKTRKKKASDKLIISKRKK.

Belongs to the universal ribosomal protein uL2 family. As to quaternary structure, part of the 50S ribosomal subunit. Forms a bridge to the 30S subunit in the 70S ribosome.

In terms of biological role, one of the primary rRNA binding proteins. Required for association of the 30S and 50S subunits to form the 70S ribosome, for tRNA binding and peptide bond formation. It has been suggested to have peptidyltransferase activity; this is somewhat controversial. Makes several contacts with the 16S rRNA in the 70S ribosome. The sequence is that of Large ribosomal subunit protein uL2 from Aliarcobacter butzleri (strain RM4018) (Arcobacter butzleri).